The following is a 2211-amino-acid chain: Nonribosomal peptide synthetase 13 (2211 aa).

The segment at threonine 76–proline 475 is adenylation 1. Positions proline 594–glutamine 671 constitute a Carrier 1 domain. O-(pantetheine 4'-phosphoryl)serine is present on serine 631. The tract at residues glutamate 710 to valine 975 is condensation 1. The segment at threonine 1169–arginine 1563 is adenylation 2. The 80-residue stretch at proline 1677–alanine 1756 folds into the Carrier 2 domain. Serine 1714 bears the O-(pantetheine 4'-phosphoryl)serine mark. Residues histidine 1814–serine 2069 form a condensation 2 region.

Belongs to the NRP synthetase family.

It carries out the reaction L-proline + L-tryptophan + 2 ATP = brevianamide F + 2 AMP + 2 diphosphate + 2 H(+). It functions in the pathway mycotoxin biosynthesis. In terms of biological role, nonribosomal peptide synthetase; part of the gene cluster that mediates the biosynthesis of fumitremorgins, indole alkaloids that carry not only intriguing chemical structures, but also interesting biological and pharmacological activities. The biosynthesis of fumitremorgin-type alkaloids begins by condensation of the two amino acids L-tryptophan and L-proline to brevianamide F, catalyzed by the non-ribosomal peptide synthetase ftmA. Brevianamide F is then prenylated by the prenyltransferase ftmPT1/ftmB in the presence of dimethylallyl diphosphate, resulting in the formation of tryprostatin B. The three cytochrome P450 monooxygenases, ftmP450-1/ftmC, ftmP450-2/ftmE and ftmP450-3/FtmG, are responsible for the conversion of tryprostatin B to 6-hydroxytryprostatin B, tryprostatin A to fumitremorgin C and fumitremorgin C to 12,13-dihydroxyfumitremorgin C, respectively. The putative methyltransferase ftmMT/ftmD is expected for the conversion of 6-hydroxytryprostatin B to tryprostatin A. FtmPT2/FtmH catalyzes the prenylation of 12,13-dihydroxyfumitre-morgin C in the presence of dimethylallyl diphosphate, resulting in the formation of fumitremorgin B. Fumitremorgin B is further converted to verruculogen by ftmOx1/ftmF via the insertion of an endoperoxide bond between the two prenyl moieties. In some fungal species, verruculogen is further converted to fumitremorgin A, but the enzymes involved in this step have not been identified yet. The chain is Nonribosomal peptide synthetase 13 from Aspergillus fumigatus (Neosartorya fumigata).